Consider the following 35-residue polypeptide: Conotoxin M11.2 (35 aa).

Disulfide bonds link Cys-2–Cys-16, Cys-9–Cys-21, Cys-15–Cys-26, and Cys-20–Cys-33.

It belongs to the conotoxin I1 superfamily. In terms of tissue distribution, expressed by the venom duct.

Its subcellular location is the secreted. The protein is Conotoxin M11.2 of Conus magus (Magical cone).